Reading from the N-terminus, the 433-residue chain is Meiotically up-regulated gene 131 protein (433 aa).

Polar residues predominate over residues 401-412 (LSSQGREISNTL). The tract at residues 401–433 (LSSQGREISNTLSRKRGAKGSNPFEIENMMPHA) is disordered.

Belongs to the UPF0300 family.

It localises to the golgi apparatus. In terms of biological role, has a role in meiosis. This is Meiotically up-regulated gene 131 protein (mug131) from Schizosaccharomyces pombe (strain 972 / ATCC 24843) (Fission yeast).